A 350-amino-acid polypeptide reads, in one-letter code: Secreted effector protein PipB2 (350 aa).

Pentapeptide repeat domains lie at 162–201 (ANLTAENLCDADLSGANLEGAVLFMADCEGANFKGANLSG), 202–241 (TSLGDSNFKNACLEDGIMCGATLDHANLTGANLQHASLLG), 247–286 (CNCSGANMDHTNLSGATLIRADMSGATLQGATIMAAIMED), and 287–326 (AVLTRANLRKASFISTNLDGADLAEANLNNTCFKDCTLTH).

As to quaternary structure, interacts with the host kinesin light chain (KLC), a subunit of the kinesin-1 motor complex.

It localises to the secreted. The protein resides in the host membrane. Its function is as follows. Effector proteins function to alter host cell physiology and promote bacterial survival in host tissues. Involved in the reorganization of late endosome/lysosome (LE/Lys) compartments in mammalian cells. Necessary and sufficient to link kinesin-1 onto the Salmonella-containing vacuole (SCV) membrane. Required for centrifugal extension of lysosomal glycoprotein-rich membrane tubules, known as Salmonella-induced filaments (Sifs), away from the SCV and toward the cell periphery. Required for virulence, but not for intracellular survival and replication in phagocytic cells. This is Secreted effector protein PipB2 (pipB2) from Salmonella paratyphi A (strain ATCC 9150 / SARB42).